The chain runs to 274 residues: Glycerol uptake facilitator protein (274 aa).

Helical transmembrane passes span 3 to 23 (AFWG…GVCA) and 38 to 58 (IVVV…VGGI). The NPA 1 motif lies at 64–66 (NPA). The next 3 helical transmembrane spans lie at 82–102 (VPVY…IIYL), 131–151 (FANV…ILAI), and 164–184 (IVGF…GYAI). Positions 185-187 (NPA) match the NPA 2 motif. The chain crosses the membrane as a helical span at residues 238 to 258 (ITSSFWIVSVILVVVLLGLYV).

It belongs to the MIP/aquaporin (TC 1.A.8) family.

It is found in the cell membrane. It carries out the reaction glycerol(in) = glycerol(out). In terms of biological role, mediates glycerol diffusion across the cytoplasmic membrane via a pore-type mechanism. This chain is Glycerol uptake facilitator protein (glpF), found in Bacillus subtilis (strain 168).